The primary structure comprises 120 residues: Hydrogenase maturation factor HypA (120 aa).

Histidine 2 contacts Ni(2+). The Zn(2+) site is built by cysteine 73, histidine 76, cysteine 89, and cysteine 92.

The protein belongs to the HypA/HybF family.

Its function is as follows. Involved in the maturation of [NiFe] hydrogenases. Required for nickel insertion into the metal center of the hydrogenase. This is Hydrogenase maturation factor HypA from Deinococcus radiodurans (strain ATCC 13939 / DSM 20539 / JCM 16871 / CCUG 27074 / LMG 4051 / NBRC 15346 / NCIMB 9279 / VKM B-1422 / R1).